We begin with the raw amino-acid sequence, 493 residues long: Malonyl-CoA decarboxylase, mitochondrial (493 aa).

A mitochondrion-targeting transit peptide spans 1-39; that stretch reads MRGFGPGLTARRLLPLRLPPRPPGPRLASGQAAGALERA. Residues 40-190 are alpha-helical domain; it reads MDELLRRAVP…VLKGMLSEWF (151 aa). Residue Lys-59 is modified to N6-acetyllysine. Lys-168 is subject to N6-acetyllysine; alternate. Residue Lys-168 is modified to N6-succinyllysine; alternate. A catalytic domain region spans residues 191 to 493; sequence SSGFLNLERV…VAQFQKNSKL (303 aa). Residue Lys-211 is modified to N6-acetyllysine. N6-succinyllysine is present on Lys-222. Malonyl-CoA is bound by residues 299–305 and Ser-329; that span reads QGVELGT. Ser-329 (proton acceptor) is an active-site residue. Lys-389 carries the post-translational modification N6-acetyllysine. A malonyl-CoA-binding site is contributed by His-423. His-423 acts as the Proton donor in catalysis. Lys-472 is subject to N6-acetyllysine. The short motif at 491-493 is the Microbody targeting signal element; the sequence is SKL.

As to quaternary structure, homotetramer. Dimer of dimers. The two subunits within a dimer display conformational differences suggesting that at any given moment, only one of the two subunits is competent for malonyl-CoA binding and catalytic activity. Under oxidizing conditions, can form disulfide-linked homotetramers (in vitro). Associates with the peroxisomal targeting signal receptor PEX5. Acetylation at Lys-472 activates malonyl-CoA decarboxylase activity. Deacetylation at Lys-472 by SIRT4 represses activity, leading to promote lipogenesis. Post-translationally, interchain disulfide bonds may form in peroxisomes (Potential). Interchain disulfide bonds are not expected to form in the reducing environment of the cytoplasm and mitochondria. As to expression, expressed in fibroblasts and hepatoblastoma cells (at protein level). Expressed strongly in heart, liver, skeletal muscle, kidney and pancreas. Expressed in myotubes. Expressed weakly in brain, placenta, spleen, thymus, testis, ovary and small intestine.

It is found in the cytoplasm. The protein localises to the mitochondrion matrix. The protein resides in the peroxisome. It localises to the peroxisome matrix. It catalyses the reaction malonyl-CoA + H(+) = acetyl-CoA + CO2. It participates in metabolic intermediate biosynthesis; acetyl-CoA biosynthesis; acetyl-CoA from malonyl-CoA: step 1/1. With respect to regulation, malonyl-CoA decarboxylase activity does not require any cofactors or divalent metal ions. Formation of interchain disulfide bonds leads to positive cooperativity between active sites and increases the affinity for malonyl-CoA and the catalytic efficiency (in vitro). Its function is as follows. Catalyzes the conversion of malonyl-CoA to acetyl-CoA. In the fatty acid biosynthesis MCD selectively removes malonyl-CoA and thus assures that methyl-malonyl-CoA is the only chain elongating substrate for fatty acid synthase and that fatty acids with multiple methyl side chains are produced. In peroxisomes it may be involved in degrading intraperoxisomal malonyl-CoA, which is generated by the peroxisomal beta-oxidation of odd chain-length dicarboxylic fatty acids. Plays a role in the metabolic balance between glucose and lipid oxidation in muscle independent of alterations in insulin signaling. May play a role in controlling the extent of ischemic injury by promoting glucose oxidation. The protein is Malonyl-CoA decarboxylase, mitochondrial of Homo sapiens (Human).